We begin with the raw amino-acid sequence, 270 residues long: Shikimate dehydrogenase (NADP(+)) (270 aa).

Residues 14–16 (SLS) and T61 each bind shikimate. K65 acts as the Proton acceptor in catalysis. NADP(+) is bound at residue D77. Residues N86 and D101 each contribute to the shikimate site. Residues 125–129 (GNGGA) and I210 contribute to the NADP(+) site. Y212 contributes to the shikimate binding site. G233 contributes to the NADP(+) binding site.

This sequence belongs to the shikimate dehydrogenase family. As to quaternary structure, homodimer.

It catalyses the reaction shikimate + NADP(+) = 3-dehydroshikimate + NADPH + H(+). It participates in metabolic intermediate biosynthesis; chorismate biosynthesis; chorismate from D-erythrose 4-phosphate and phosphoenolpyruvate: step 4/7. In terms of biological role, involved in the biosynthesis of the chorismate, which leads to the biosynthesis of aromatic amino acids. Catalyzes the reversible NADPH linked reduction of 3-dehydroshikimate (DHSA) to yield shikimate (SA). The chain is Shikimate dehydrogenase (NADP(+)) from Clostridium beijerinckii (strain ATCC 51743 / NCIMB 8052) (Clostridium acetobutylicum).